The following is a 484-amino-acid chain: Aspartyl/glutamyl-tRNA(Asn/Gln) amidotransferase subunit B (484 aa).

It belongs to the GatB/GatE family. GatB subfamily. As to quaternary structure, heterotrimer of A, B and C subunits.

It catalyses the reaction L-glutamyl-tRNA(Gln) + L-glutamine + ATP + H2O = L-glutaminyl-tRNA(Gln) + L-glutamate + ADP + phosphate + H(+). The catalysed reaction is L-aspartyl-tRNA(Asn) + L-glutamine + ATP + H2O = L-asparaginyl-tRNA(Asn) + L-glutamate + ADP + phosphate + 2 H(+). Its function is as follows. Allows the formation of correctly charged Asn-tRNA(Asn) or Gln-tRNA(Gln) through the transamidation of misacylated Asp-tRNA(Asn) or Glu-tRNA(Gln) in organisms which lack either or both of asparaginyl-tRNA or glutaminyl-tRNA synthetases. The reaction takes place in the presence of glutamine and ATP through an activated phospho-Asp-tRNA(Asn) or phospho-Glu-tRNA(Gln). This chain is Aspartyl/glutamyl-tRNA(Asn/Gln) amidotransferase subunit B, found in Bordetella bronchiseptica (strain ATCC BAA-588 / NCTC 13252 / RB50) (Alcaligenes bronchisepticus).